A 720-amino-acid chain; its full sequence is MSSNKKRRIDEKPMSALSALQARRREAAASPVQTTQTGSESDEKSVTTSVNPYQLLRKDSSQSTAPKTPKKNVVKDQYLPRGAESPASRSRGVVIASGNTDTLNPELAGASQKVVREYSSFRLSKQNHRVKTGGVVELNLSNSERFLVLGSFGIRVIQGEVSLAGATLYPSETIEWVHAPHCHAVPMLRTIDETILELHPDRNARGIRQLGRLSPLFRKIWNESPETNSSKTSKESTFEIIYTSEDAPKKCIIQKLVSPPEWNKKLSSLVATSRKKPSLSTLICGPKSAGKSTFSRLFLNGLLTDRSQKQGARSVVILDLDPGQPEYAPPGTLSLVFVTKPNLGTPFTHPSLKNSAFTVVRSHSMASATPAPNPDLYLACATDLFDTYSKHYSGAPLIVNTPGWIQGTGLDLLSSLIEKIKPQEVLYMSEAGPDEAVNALRAATKLMFTELPSQPSEFTSRTAAHLRAMQTMSYFHLQNTALKTSNLLDTSTRLKWDASPLSSRAPLLVQYSSSKRGVLGLLSYDYQCSPELLADTVNGLVLAAVEIEDRKAFSNFPQEVAPPPLVSTSPENIPFIPNYDDVALDPRYSRTIGLVLLRGIDTKSETLQLVTPIPLEEFRSIKSQGRSIVLLHGKFDTPNWAYTEELYERAGTEEGNDMVLEVTEEDTEDDQSGVEPEGADGVSDLTEVPWVEVLKGSQRRPVGSQVWRPLRHLGRNNTGD.

The disordered stretch occupies residues Met-1–Arg-91. Gly-285–Ser-292 lines the ATP pocket. Over residues Thr-663–Ser-672 the composition is skewed to acidic residues. Disordered stretches follow at residues Thr-663–Thr-686 and Gln-698–Asp-720.

It belongs to the Clp1 family. NOL9/GRC3 subfamily.

Its subcellular location is the nucleus. It localises to the nucleolus. Functionally, polynucleotide 5'-kinase involved in rRNA processing. The polypeptide is Polynucleotide 5'-hydroxyl-kinase GRC3 (GRC3) (Gibberella zeae (strain ATCC MYA-4620 / CBS 123657 / FGSC 9075 / NRRL 31084 / PH-1) (Wheat head blight fungus)).